The sequence spans 236 residues: MKSLSFLNHEFEAFPSPELALTDPNGLLAIGGDLRPERLLTAYYNGIFPWFNADDPILWWSPDPRAIFMLGKIRISTSLCKYLKKQPWHFTINHAFTSVMAGCAEPRPKQNGTWITDEIQMAYRELHQNGHAHSIEVWEGEQLIGGLYGLAIGQVFCGESMFHRQTNASKAAIVVLQQHLIKRGFKLIDAQVMNPHLESLGAKAIKRTHFIELLTQFRDKKVHPDAWIPSEVFLEL.

The protein belongs to the L/F-transferase family.

It localises to the cytoplasm. It carries out the reaction N-terminal L-lysyl-[protein] + L-leucyl-tRNA(Leu) = N-terminal L-leucyl-L-lysyl-[protein] + tRNA(Leu) + H(+). It catalyses the reaction N-terminal L-arginyl-[protein] + L-leucyl-tRNA(Leu) = N-terminal L-leucyl-L-arginyl-[protein] + tRNA(Leu) + H(+). The enzyme catalyses L-phenylalanyl-tRNA(Phe) + an N-terminal L-alpha-aminoacyl-[protein] = an N-terminal L-phenylalanyl-L-alpha-aminoacyl-[protein] + tRNA(Phe). In terms of biological role, functions in the N-end rule pathway of protein degradation where it conjugates Leu, Phe and, less efficiently, Met from aminoacyl-tRNAs to the N-termini of proteins containing an N-terminal arginine or lysine. The chain is Leucyl/phenylalanyl-tRNA--protein transferase from Shewanella putrefaciens (strain CN-32 / ATCC BAA-453).